Consider the following 490-residue polypeptide: Hippocampus abundant transcript 1 protein (490 aa).

M1 carries the N-acetylmethionine modification. Residues 1 to 40 (MTQGKKKKRAANRSIMLAKKIIIKDGGTPQGIGSPSVYHA) lie on the Extracellular side of the membrane. N-linked (GlcNAc...) asparagine glycosylation occurs at N12. The chain crosses the membrane as a helical span at residues 41–61 (VIVIFLEFFAWGLLTAPTLVV). The Cytoplasmic portion of the chain corresponds to 62–74 (LHETFPKHTFLMN). A helical membrane pass occupies residues 75–95 (GLIQGVKGLLSFLSAPLIGAL). The Extracellular portion of the chain corresponds to 96 to 103 (SDVWGRKS). Residues 104–124 (FLLLTVFFTCAPIPLMKISPW) form a helical membrane-spanning segment. At 125 to 126 (WY) the chain is on the cytoplasmic side. Residues 127–147 (FAVISVSGVFAVTFSVVFAYV) traverse the membrane as a helical segment. At 148–160 (ADITQEHERSMAY) the chain is on the extracellular side. Residues 161–181 (GLVSATFAASLVTSPAIGAYL) form a helical membrane-spanning segment. The Cytoplasmic portion of the chain corresponds to 182–188 (GRVYGDS). Residues 189 to 209 (LVVVLATAIALLDICFILVAV) form a helical membrane-spanning segment. The Extracellular portion of the chain corresponds to 210–243 (PESLPEKMRPASWGAPISWEQADPFASLKKVGQD). A helical membrane pass occupies residues 244–264 (SIVLLICITVFLSYLPEAGQY). The Cytoplasmic segment spans residues 265–284 (SSFFLYLRQIMKFSPESVAA). The helical transmembrane segment at 285 to 305 (FIAVLGILSIIAQTIVLSLLM) threads the bilayer. Over 306 to 313 (RSIGNKNT) the chain is Extracellular. A helical membrane pass occupies residues 314–334 (ILLGLGFQILQLAWYGFGSEP). Residues 335 to 337 (WMM) lie on the Cytoplasmic side of the membrane. A helical membrane pass occupies residues 338–358 (WAAGAVAAMSSITFPAVSALV). Topologically, residues 359 to 379 (SRTADADQQGVVQGMITGIRG) are extracellular. The helical transmembrane segment at 380-400 (LCNGLGPALYGFIFYIFHVEL) threads the bilayer. At 401–427 (KELPITGTDLGTNTSPQHHFEQNSIIP) the chain is on the cytoplasmic side. A helical membrane pass occupies residues 428–448 (GPPFLFGACSVLLALLVALFI). At 449 to 490 (PEHTNLSLRSSSWRKHCGSHSHPHSTQAPGEAKEPLLQDTNV) the chain is on the extracellular side. N453 carries an N-linked (GlcNAc...) asparagine glycan. The segment at 466–490 (GSHSHPHSTQAPGEAKEPLLQDTNV) is disordered.

Belongs to the major facilitator superfamily. As to expression, expressed in various tissues.

The protein resides in the membrane. The sequence is that of Hippocampus abundant transcript 1 protein from Mus musculus (Mouse).